Reading from the N-terminus, the 614-residue chain is ATP-dependent RNA helicase dbp-3 (614 aa).

Positions 1–138 (MSSTKKHSRS…GTTTPAASTN (138 aa)) are disordered. Residues 9-36 (RSEGEEKDARLAKKVKTDETPVDGEVKK) show a composition bias toward basic and acidic residues. Basic residues-rich tracts occupy residues 37–58 (ERKKDKKEKKDKKEKKDKKSKK) and 91–109 (KKEKKDKKEKKDKKEKKAK). Over residues 117–138 (EESTSASKATTNGTTTPAASTN) the composition is skewed to low complexity. The Q motif signature appears at 180 to 207 (MNFSQLPQSNLISKNPFAAYTNPTPIQS). The Helicase ATP-binding domain occupies 210–394 (WPFSLSGRDV…ESYMINPAQV (185 aa)). Residue 223 to 230 (AETGSGKT) participates in ATP binding. The DEAD box motif lies at 340 to 343 (DEAD). The region spanning 435–584 (RLYELLKEAQ…PVPEELLKFG (150 aa)) is the Helicase C-terminal domain.

It belongs to the DEAD box helicase family. DDX5/DBP2 subfamily.

It localises to the nucleus. The protein localises to the nucleolus. The enzyme catalyses ATP + H2O = ADP + phosphate + H(+). In terms of biological role, ATP-dependent RNA helicase required for 60S ribosomal subunit synthesis. Involved in efficient pre-rRNA processing, predominantly at site A3, which is necessary for the normal formation of 25S and 5.8S rRNAs. This is ATP-dependent RNA helicase dbp-3 (dbp-3) from Neurospora crassa (strain ATCC 24698 / 74-OR23-1A / CBS 708.71 / DSM 1257 / FGSC 987).